Here is a 90-residue protein sequence, read N- to C-terminus: Antitoxin epsilon 2 (90 aa).

It belongs to the epsilon antitoxin family. As to quaternary structure, in the presence of the zeta toxin, forms an inactive PezA(2)PezT(2) heterotetramer.

In terms of biological role, antitoxin component of a type II toxin-antitoxin (TA) system. Neutralizes the toxic effect of zeta toxin. Part of a postsegregational killing (PSK) system involved in the killing of plasmid-free cells. Continuous synthesis of the epsilon antitoxin is required to counteract the zeta toxin. The sequence is that of Antitoxin epsilon 2 from Enterococcus faecalis (Streptococcus faecalis).